Consider the following 314-residue polypeptide: Melanocyte-stimulating hormone receptor (314 aa).

Residues 1 to 35 (MSMLAPLRLVREPWNASEGNQSNATAGAGGAWCQG) lie on the Extracellular side of the membrane. N-linked (GlcNAc...) asparagine glycosylation is found at N15, N20, and N23. A helical membrane pass occupies residues 36-61 (LDIPNELFLTLGLVSLVENLLVVAAI). Residues 62–70 (LKNRNLHSP) are Cytoplasmic-facing. Residues 71-91 (TYYFICCLAVSDMLVSVSNLA) form a helical membrane-spanning segment. The Extracellular portion of the chain corresponds to 92–116 (KTLFMLLMEHGVLVIRASIVRHMDN). The helical transmembrane segment at 117–138 (VIDMLICSSVVSSLSFLGVIAV) threads the bilayer. At 139-161 (DRYITIFYALRYHSIMTLQRAVV) the chain is on the cytoplasmic side. A helical membrane pass occupies residues 162 to 181 (TMASVWLASTVSSTVLITYY). Over 182-189 (RNNAILLC) the chain is Extracellular. A helical transmembrane segment spans residues 190-209 (LIGFFLFMLVLMLVLYIHMF). Over 210–237 (ALACHHVRSISSQQKQPTIYRTSSLKGA) the chain is Cytoplasmic. A helical membrane pass occupies residues 238–263 (VTLTILLGVFFICWGPFFFHLILIVT). Residues 264 to 276 (CPTNPFCTCFFSY) lie on the Extracellular side of the membrane. The helical transmembrane segment at 277–297 (FNLFLILIICNSVVDPLIYAF) threads the bilayer. Topologically, residues 298 to 314 (RSQELRRTLREVVLCSW) are cytoplasmic. The S-palmitoyl cysteine moiety is linked to residue C312.

This sequence belongs to the G-protein coupled receptor 1 family.

The protein localises to the cell membrane. Functionally, receptor for MSH (alpha, beta and gamma) and ACTH. The activity of this receptor is mediated by G proteins which activate adenylate cyclase. Mediates melanogenesis via regulation of cAMP signaling in melanocytes. This is Melanocyte-stimulating hormone receptor (MC1R) from Gallus gallus (Chicken).